The sequence spans 246 residues: Protein YIPF4 (246 aa).

At 1-115 (MQPPGPPPAY…FNRQVVRDNP (115 aa)) the chain is on the cytoplasmic side. A helical transmembrane segment spans residues 116–136 (DFWGPLAVVLFFSMISLYGQF). Topologically, residues 137–140 (RVVS) are lumenal. The chain crosses the membrane as a helical span at residues 141-161 (WIITIWIFGSLTIFLLARVLG). The Cytoplasmic portion of the chain corresponds to 162 to 168 (GEVAYGQ). Residues 169-189 (VLGVIGYSLLPLIVIAPILLV) traverse the membrane as a helical segment. Residues 190–197 (VGSFEMVS) are Lumenal-facing. The chain crosses the membrane as a helical span at residues 198 to 218 (TLIKLFGVFWAAYSAASLLVG). At 219–225 (EEFKTKK) the chain is on the cytoplasmic side. A helical transmembrane segment spans residues 226–246 (PLLIYPIFLLYIYFLSLYTGV).

Belongs to the YIP1 family. Interacts with YIPF3 and YIPF5.

The protein resides in the golgi apparatus. Its subcellular location is the cis-Golgi network membrane. In terms of biological role, involved in the maintenance of the Golgi structure. This is Protein YIPF4 (Yipf4) from Mus musculus (Mouse).